We begin with the raw amino-acid sequence, 406 residues long: MMEGLDDGPDFLSEEDRGLKAINVDLQSDAALQVDISDALSERDRVKFTVHTKSSLPNFKQNEFSVVRQHEEFIWLHDSFVENEDYAGYIIPPAPPRPDFDASREKLQKLGEGEGSMTKEEFTKMKQELEAEYLAIFKKTVAMHEVFLCRVAAHPILRKDLNFHVFLEYNQDLSVRGKNKKEKLEDFFKNMVKSADGVIVSGVKDVDDFFEHERTFLLEYHNRVKDASAKSDRMTRSHKSAADDYNRIGSSLYALGTQDSTDICKFFLKVSELFDKTRKIEARVSADEDLKLSDLLKYYLRESQAAKDLLYRRSRSLVDYENANKALDKARAKNKDVLQAETSQQLCCQKFEKISESAKQELIDFKTRRVAAFRKNLVELAELELKHAKGNLQLLQNCLAVLNGDT.

Residue Met1 is modified to N-acetylmethionine. N-acetylmethionine; in Sorting nexin-6, N-terminally processed is present on Met2. The segment at 2–179 is interaction with PIM1; sequence MEGLDDGPDF…NQDLSVRGKN (178 aa). The region spanning 26–173 is the PX domain; sequence LQSDAALQVD…HVFLEYNQDL (148 aa). Residues 41 to 47, 100 to 106, and 114 to 117 each bind a 1,2-diacyl-sn-glycero-3-phospho-(1D-myo-inositol-4,5-bisphosphate); these read SERDRVK, FDASREK, and EGSM. Ser116 and Ser194 each carry phosphoserine. The interval 182–199 is membrane-binding amphipathic helix; the sequence is EKLEDFFKNMVKSADGVI. The 204-residue stretch at 203 to 406 folds into the BAR domain; that stretch reads VKDVDDFFEH…NCLAVLNGDT (204 aa).

Belongs to the sorting nexin family. Forms heterodimers with BAR domain-containing sorting nexins SNX1 and SNX2. The heterodimers are proposed to self-assemble into helical arrays on the membrane to stabilize and expand local membrane curvature underlying endosomal tubule formation. Thought to be a component of the originally described retromer complex (also called SNX-BAR retromer) which is a pentamer containing the heterotrimeric retromer cargo-selective complex (CSC), also described as vacuolar protein sorting subcomplex (VPS), and a heterodimeric membrane-deforming subcomplex formed between SNX1 or SNX2 and SNX5 or SNX6 (also called SNX-BAR subcomplex); the respective CSC and SNX-BAR subcomplexes associate with low affinity. Interacts with SNX1, SNX2, VPS26A, VPS29, VPS35, TGFB receptors, BACE1, BRMS1, PIP5K1C. Interacts with DCTN1; the association with DCTN1 is involved in movement of retromer-c ontaining vesicles toward the TGN. Interacts with PIM1; translocating SNX6 to the nucleus. Interacts with CDKN1B and GIT1. In vitro phosphorylated by PIM1; not affecting PIM1-dependent nuclear translocation.

It localises to the early endosome membrane. It is found in the cytoplasmic vesicle. The protein resides in the cytoplasm. Its subcellular location is the nucleus. Involved in several stages of intracellular trafficking. Interacts with membranes phosphatidylinositol 3,4-bisphosphate and/or phosphatidylinositol 4,5-bisphosphate. Acts in part as component of the retromer membrane-deforming SNX-BAR subcomplex. The SNX-BAR retromer mediates retrograde transport of cargo proteins from endosomes to the trans-Golgi network (TGN) and is involved in endosome-to-plasma membrane transport for cargo protein recycling. The SNX-BAR subcomplex functions to deform the donor membrane into a tubular profile called endosome-to-TGN transport carrier (ETC). Does not have in vitro vesicle-to-membrane remodeling activity. Involved in retrograde endosome-to-TGN transport of lysosomal enzyme receptor IGF2R. May function as link between transport vesicles and dynactin. Negatively regulates retrograde transport of BACE1 from the cell surface to the trans-Golgi network. Involved in E-cadherin sorting and degradation; inhibits PIP5K1C-mediated E-cadherin degradation. In association with GIT1 involved in EGFR degradation. Promotes lysosomal degradation of CDKN1B. May contribute to transcription regulation. In Mus musculus (Mouse), this protein is Sorting nexin-6 (Snx6).